The chain runs to 26 residues: Ribulose bisphosphate carboxylase large chain (26 aa).

The propeptide occupies 1-2 (MS). N-acetylproline is present on proline 3.

Belongs to the RuBisCO large chain family. Type I subfamily. In terms of assembly, heterohexadecamer of 8 large chains and 8 small chains.

The protein resides in the plastid. Its subcellular location is the chloroplast. It catalyses the reaction 2 (2R)-3-phosphoglycerate + 2 H(+) = D-ribulose 1,5-bisphosphate + CO2 + H2O. The catalysed reaction is D-ribulose 1,5-bisphosphate + O2 = 2-phosphoglycolate + (2R)-3-phosphoglycerate + 2 H(+). Functionally, ruBisCO catalyzes two reactions: the carboxylation of D-ribulose 1,5-bisphosphate, the primary event in carbon dioxide fixation, as well as the oxidative fragmentation of the pentose substrate in the photorespiration process. Both reactions occur simultaneously and in competition at the same active site. The polypeptide is Ribulose bisphosphate carboxylase large chain (rbcL) (Vicia faba (Broad bean)).